The chain runs to 406 residues: Peptidase T (406 aa).

Residue H82 coordinates Zn(2+). Residue D84 is part of the active site. Residue D142 coordinates Zn(2+). The active-site Proton acceptor is the E176. Residues E177, D199, and H381 each coordinate Zn(2+).

The protein belongs to the peptidase M20B family. Zn(2+) serves as cofactor.

The protein localises to the cytoplasm. The enzyme catalyses Release of the N-terminal residue from a tripeptide.. Its function is as follows. Cleaves the N-terminal amino acid of tripeptides. This is Peptidase T from Streptococcus agalactiae serotype V (strain ATCC BAA-611 / 2603 V/R).